The chain runs to 161 residues: Regulator of ribonuclease activity A (161 aa).

This sequence belongs to the RraA family. As to quaternary structure, homotrimer. Binds to both RNA-binding sites in the C-terminal region of Rne and to RhlB.

The protein resides in the cytoplasm. In terms of biological role, globally modulates RNA abundance by binding to RNase E (Rne) and regulating its endonucleolytic activity. Can modulate Rne action in a substrate-dependent manner by altering the composition of the degradosome. Modulates RNA-binding and helicase activities of the degradosome. In Sodalis glossinidius (strain morsitans), this protein is Regulator of ribonuclease activity A.